A 145-amino-acid polypeptide reads, in one-letter code: Large ribosomal subunit protein uL13 (145 aa).

The protein belongs to the universal ribosomal protein uL13 family. In terms of assembly, part of the 50S ribosomal subunit.

This protein is one of the early assembly proteins of the 50S ribosomal subunit, although it is not seen to bind rRNA by itself. It is important during the early stages of 50S assembly. In Bacillus mycoides (strain KBAB4) (Bacillus weihenstephanensis), this protein is Large ribosomal subunit protein uL13.